The sequence spans 502 residues: UPF0371 protein CLK_3516 (502 aa).

Belongs to the UPF0371 family.

This chain is UPF0371 protein CLK_3516, found in Clostridium botulinum (strain Loch Maree / Type A3).